Consider the following 474-residue polypeptide: Trehalose-6-phosphate synthase (474 aa).

D-glucose 6-phosphate is bound at residue Arg10. Residue 22–23 participates in UDP-alpha-D-glucose binding; the sequence is GG. D-glucose 6-phosphate-binding residues include Tyr77 and Asp131. The UDP-alpha-D-glucose site is built by Arg263 and Lys268. Residue Arg301 coordinates D-glucose 6-phosphate. UDP-alpha-D-glucose is bound by residues Phe340 and 366-370; that span reads LVAKE.

The protein belongs to the glycosyltransferase 20 family. Homotetramer.

It carries out the reaction D-glucose 6-phosphate + UDP-alpha-D-glucose = alpha,alpha-trehalose 6-phosphate + UDP + H(+). It functions in the pathway glycan biosynthesis; trehalose biosynthesis. Functionally, probably involved in the osmoprotection via the biosynthesis of trehalose. Catalyzes the transfer of glucose from UDP-alpha-D-glucose (UDP-Glc) to D-glucose 6-phosphate (Glc-6-P) to form trehalose-6-phosphate. Acts with retention of the anomeric configuration of the UDP-sugar donor. In Escherichia coli O9:H4 (strain HS), this protein is Trehalose-6-phosphate synthase.